We begin with the raw amino-acid sequence, 462 residues long: Elongation factor 1-alpha 1 (462 aa).

The residue at position 2 (Gly-2) is a N,N,N-trimethylglycine. One can recognise a tr-type G domain in the interval 5-242; that stretch reads KTHINIVVIG…DCILPPTRPT (238 aa). The interval 14–21 is G1; the sequence is GHVDSGKS. 14-21 contacts GTP; it reads GHVDSGKS. Positions 70–74 are G2; sequence GITID. Positions 91–94 are G3; that stretch reads DAPG. GTP contacts are provided by residues 153–156 and 194–196; these read NKMD and SGW. Positions 153–156 are G4; it reads NKMD. A G5 region spans residues 194–196; that stretch reads SGW. Residues Glu-301 and Glu-374 each carry the 5-glutamyl glycerylphosphorylethanolamine modification.

Belongs to the TRAFAC class translation factor GTPase superfamily. Classic translation factor GTPase family. EF-Tu/EF-1A subfamily.

The protein localises to the cytoplasm. It carries out the reaction GTP + H2O = GDP + phosphate + H(+). Its function is as follows. Translation elongation factor that catalyzes the GTP-dependent binding of aminoacyl-tRNA (aa-tRNA) to the A-site of ribosomes during the elongation phase of protein synthesis. Base pairing between the mRNA codon and the aa-tRNA anticodon promotes GTP hydrolysis, releasing the aa-tRNA from EEF1A1 and allowing its accommodation into the ribosome. The growing protein chain is subsequently transferred from the P-site peptidyl tRNA to the A-site aa-tRNA, extending it by one amino acid through ribosome-catalyzed peptide bond formation. This Gallus gallus (Chicken) protein is Elongation factor 1-alpha 1 (EEF1A).